Consider the following 617-residue polypeptide: Dihydroxy-acid dehydratase (617 aa).

Mg(2+) is bound at residue Asp81. Cys122 serves as a coordination point for [2Fe-2S] cluster. Mg(2+) is bound by residues Asp123 and Lys124. An N6-carboxylysine modification is found at Lys124. Residue Cys197 coordinates [2Fe-2S] cluster. Residue Glu494 coordinates Mg(2+). Ser520 functions as the Proton acceptor in the catalytic mechanism.

This sequence belongs to the IlvD/Edd family. As to quaternary structure, homodimer. It depends on [2Fe-2S] cluster as a cofactor. Requires Mg(2+) as cofactor.

It carries out the reaction (2R)-2,3-dihydroxy-3-methylbutanoate = 3-methyl-2-oxobutanoate + H2O. The enzyme catalyses (2R,3R)-2,3-dihydroxy-3-methylpentanoate = (S)-3-methyl-2-oxopentanoate + H2O. It functions in the pathway amino-acid biosynthesis; L-isoleucine biosynthesis; L-isoleucine from 2-oxobutanoate: step 3/4. Its pathway is amino-acid biosynthesis; L-valine biosynthesis; L-valine from pyruvate: step 3/4. Functions in the biosynthesis of branched-chain amino acids. Catalyzes the dehydration of (2R,3R)-2,3-dihydroxy-3-methylpentanoate (2,3-dihydroxy-3-methylvalerate) into 2-oxo-3-methylpentanoate (2-oxo-3-methylvalerate) and of (2R)-2,3-dihydroxy-3-methylbutanoate (2,3-dihydroxyisovalerate) into 2-oxo-3-methylbutanoate (2-oxoisovalerate), the penultimate precursor to L-isoleucine and L-valine, respectively. This chain is Dihydroxy-acid dehydratase, found in Parafrankia sp. (strain EAN1pec).